A 138-amino-acid chain; its full sequence is Large ribosomal subunit protein uL16 (138 aa).

Over residues 1–17 the composition is skewed to basic residues; that stretch reads MLIPRKVKHRKQHHPRQ. Residues 1–24 are disordered; sequence MLIPRKVKHRKQHHPRQRGIASGG.

The protein belongs to the universal ribosomal protein uL16 family. As to quaternary structure, part of the 50S ribosomal subunit.

In terms of biological role, binds 23S rRNA and is also seen to make contacts with the A and possibly P site tRNAs. The protein is Large ribosomal subunit protein uL16 of Mycobacterium ulcerans (strain Agy99).